We begin with the raw amino-acid sequence, 204 residues long: tRNA (pseudouridine(54)-N(1))-methyltransferase (204 aa).

S-adenosyl-L-methionine contacts are provided by residues Leu-130, Gly-157, 180 to 185 (LSPLEL), and Cys-190.

It belongs to the methyltransferase superfamily. TrmY family. As to quaternary structure, homodimer.

The protein resides in the cytoplasm. The enzyme catalyses pseudouridine(54) in tRNA + S-adenosyl-L-methionine = N(1)-methylpseudouridine(54) in tRNA + S-adenosyl-L-homocysteine + H(+). Its function is as follows. Specifically catalyzes the N1-methylation of pseudouridine at position 54 (Psi54) in tRNAs. The polypeptide is tRNA (pseudouridine(54)-N(1))-methyltransferase (Methanococcus aeolicus (strain ATCC BAA-1280 / DSM 17508 / OCM 812 / Nankai-3)).